The following is a 196-amino-acid chain: tRNA (pseudouridine(54)-N(1))-methyltransferase (196 aa).

L126 contributes to the S-adenosyl-L-methionine binding site.

Belongs to the methyltransferase superfamily. TrmY family. As to quaternary structure, homodimer.

It localises to the cytoplasm. The catalysed reaction is pseudouridine(54) in tRNA + S-adenosyl-L-methionine = N(1)-methylpseudouridine(54) in tRNA + S-adenosyl-L-homocysteine + H(+). Functionally, specifically catalyzes the N1-methylation of pseudouridine at position 54 (Psi54) in tRNAs. This Halobacterium salinarum (strain ATCC 700922 / JCM 11081 / NRC-1) (Halobacterium halobium) protein is tRNA (pseudouridine(54)-N(1))-methyltransferase.